Reading from the N-terminus, the 198-residue chain is GTP cyclohydrolase-2 (198 aa).

Position 52–56 (Arg-52–Glu-56) interacts with GTP. Residues Cys-57, Cys-68, and Cys-70 each coordinate Zn(2+). Residues Gln-73, Glu-94–Arg-96, and Thr-116 each bind GTP. Asp-128 acts as the Proton acceptor in catalysis. Arg-130 functions as the Nucleophile in the catalytic mechanism. The GTP site is built by Thr-151 and Lys-156.

This sequence belongs to the GTP cyclohydrolase II family. Zn(2+) serves as cofactor.

It carries out the reaction GTP + 4 H2O = 2,5-diamino-6-hydroxy-4-(5-phosphoribosylamino)-pyrimidine + formate + 2 phosphate + 3 H(+). It functions in the pathway cofactor biosynthesis; riboflavin biosynthesis; 5-amino-6-(D-ribitylamino)uracil from GTP: step 1/4. Functionally, catalyzes the conversion of GTP to 2,5-diamino-6-ribosylamino-4(3H)-pyrimidinone 5'-phosphate (DARP), formate and pyrophosphate. This Vibrio parahaemolyticus serotype O3:K6 (strain RIMD 2210633) protein is GTP cyclohydrolase-2.